The sequence spans 508 residues: UDP-N-acetylmuramoyl-L-alanyl-D-glutamate--2,6-diaminopimelate ligase (508 aa).

S43 is a UDP-N-acetyl-alpha-D-muramoyl-L-alanyl-D-glutamate binding site. Position 124–130 (124–130 (GTNGKTT)) interacts with ATP. UDP-N-acetyl-alpha-D-muramoyl-L-alanyl-D-glutamate contacts are provided by residues 166-167 (TT), S193, and R201. An N6-carboxylysine modification is found at K233. Residues R404, 428–431 (DNPR), G478, and E482 contribute to the meso-2,6-diaminopimelate site. The short motif at 428–431 (DNPR) is the Meso-diaminopimelate recognition motif element.

It belongs to the MurCDEF family. MurE subfamily. Requires Mg(2+) as cofactor. Carboxylation is probably crucial for Mg(2+) binding and, consequently, for the gamma-phosphate positioning of ATP.

Its subcellular location is the cytoplasm. The enzyme catalyses UDP-N-acetyl-alpha-D-muramoyl-L-alanyl-D-glutamate + meso-2,6-diaminopimelate + ATP = UDP-N-acetyl-alpha-D-muramoyl-L-alanyl-gamma-D-glutamyl-meso-2,6-diaminopimelate + ADP + phosphate + H(+). Its pathway is cell wall biogenesis; peptidoglycan biosynthesis. In terms of biological role, catalyzes the addition of meso-diaminopimelic acid to the nucleotide precursor UDP-N-acetylmuramoyl-L-alanyl-D-glutamate (UMAG) in the biosynthesis of bacterial cell-wall peptidoglycan. This is UDP-N-acetylmuramoyl-L-alanyl-D-glutamate--2,6-diaminopimelate ligase from Chlorobaculum tepidum (strain ATCC 49652 / DSM 12025 / NBRC 103806 / TLS) (Chlorobium tepidum).